Consider the following 268-residue polypeptide: Tryptophan synthase alpha chain (268 aa).

Active-site proton acceptor residues include E47 and D58.

It belongs to the TrpA family. In terms of assembly, tetramer of two alpha and two beta chains.

The enzyme catalyses (1S,2R)-1-C-(indol-3-yl)glycerol 3-phosphate + L-serine = D-glyceraldehyde 3-phosphate + L-tryptophan + H2O. The protein operates within amino-acid biosynthesis; L-tryptophan biosynthesis; L-tryptophan from chorismate: step 5/5. Functionally, the alpha subunit is responsible for the aldol cleavage of indoleglycerol phosphate to indole and glyceraldehyde 3-phosphate. The protein is Tryptophan synthase alpha chain of Chlorobium phaeobacteroides (strain BS1).